Reading from the N-terminus, the 53-residue chain is ATP synthase protein 8 (53 aa).

Residues 9-29 traverse the membrane as a helical segment; the sequence is WLILFFIFSITLVIFNILNYF.

This sequence belongs to the ATPase protein 8 family. As to quaternary structure, F-type ATPases have 2 components, CF(1) - the catalytic core - and CF(0) - the membrane proton channel.

The protein localises to the mitochondrion membrane. In terms of biological role, mitochondrial membrane ATP synthase (F(1)F(0) ATP synthase or Complex V) produces ATP from ADP in the presence of a proton gradient across the membrane which is generated by electron transport complexes of the respiratory chain. F-type ATPases consist of two structural domains, F(1) - containing the extramembraneous catalytic core and F(0) - containing the membrane proton channel, linked together by a central stalk and a peripheral stalk. During catalysis, ATP synthesis in the catalytic domain of F(1) is coupled via a rotary mechanism of the central stalk subunits to proton translocation. Part of the complex F(0) domain. Minor subunit located with subunit a in the membrane. This chain is ATP synthase protein 8 (mt:ATPase8), found in Anopheles quadrimaculatus (Common malaria mosquito).